Consider the following 111-residue polypeptide: Large ribosomal subunit protein P1 (111 aa).

Residues 65–89 (SGAGSGPAPAAAAAAPAAGGAAPAA) are compositionally biased toward low complexity. The tract at residues 65–111 (SGAGSGPAPAAAAAAPAAGGAAPAAETKKKEEPKEESDDDMGFGLFD) is disordered.

Belongs to the eukaryotic ribosomal protein P1/P2 family. As to quaternary structure, P1 and P2 exist as dimers at the large ribosomal subunit.

Functionally, plays an important role in the elongation step of protein synthesis. The polypeptide is Large ribosomal subunit protein P1 (Caenorhabditis elegans).